The primary structure comprises 115 residues: Cell division topological specificity factor (115 aa).

A disordered region spans residues 89–115 (TGQIQLKEPKNQSEVDSPETEGKDQNS).

Belongs to the MinE family.

Functionally, prevents the cell division inhibition by proteins MinC and MinD at internal division sites while permitting inhibition at polar sites. This ensures cell division at the proper site by restricting the formation of a division septum at the midpoint of the long axis of the cell. The sequence is that of Cell division topological specificity factor from Prochlorococcus marinus (strain NATL2A).